The chain runs to 152 residues: MGREVEPIFDLVLLWFLLVPLVVYALLLLLLFFTTPYLIVEAIPFCYGIALMMISLFMSGMFPQAWNVWVIFGRFVLVLVVLMLSFFVINKLTNLVLLRSRYAMVVAQGLVHTGKVKQQSQQAMSDIKTKWDKEKSKTVVVTIKKKRVKSSD.

The next 3 helical transmembrane spans lie at 13-33 (LLWF…LLFF), 38-58 (LIVE…SLFM), and 69-89 (WVIF…FFVI).

Its subcellular location is the cell membrane. This is an uncharacterized protein from Mycoplasma pneumoniae (strain ATCC 29342 / M129 / Subtype 1) (Mycoplasmoides pneumoniae).